Reading from the N-terminus, the 568-residue chain is Poly(A) polymerase (568 aa).

Residues 87–89 (YGS), 99–102 (SDID), 100–102 (DID), Asp154, Lys215, Tyr224, and 233–234 (GV) contribute to the ATP site. The Mg(2+) site is built by Asp100, Asp102, and Asp154. 2 positions are modified to phosphoserine: Ser452 and Ser550. The tract at residues 525–568 (NEKRPSKKSKRKNLDARHETVKRSKSDAASGDNINGTTAAVDVN) is disordered. Residues 536-550 (KNLDARHETVKRSKS) are compositionally biased toward basic and acidic residues.

This sequence belongs to the poly(A) polymerase family. Component of the cleavage and polyadenylation factor (CPF) complex, which is composed of PTI1, SYC1, SSU72, GLC7, MPE1, REF2, PFS2, PTA1, YSH1/BRR5, SWD2, CFT2/YDH1, YTH1, CFT1/YHH1, FIP1 and PAP1. Interacts with FIR1 and RRP6. It depends on Mg(2+) as a cofactor. Mn(2+) is required as a cofactor.

It localises to the nucleus. It catalyses the reaction RNA(n) + ATP = RNA(n)-3'-adenine ribonucleotide + diphosphate. Polymerase component of the cleavage and polyadenylation factor (CPF) complex, which plays a key role in polyadenylation-dependent pre-mRNA 3'-end formation and cooperates with cleavage factors including the CFIA complex and NAB4/CFIB. This is Poly(A) polymerase (PAP1) from Saccharomyces cerevisiae (strain ATCC 204508 / S288c) (Baker's yeast).